The chain runs to 668 residues: DNA ligase (668 aa).

NAD(+) contacts are provided by residues 37 to 41 (DAVYD), 86 to 87 (SM), and Glu-116. Lys-118 acts as the N6-AMP-lysine intermediate in catalysis. NAD(+) is bound by residues Arg-139, Glu-173, Lys-288, and Lys-312. Cys-406, Cys-409, Cys-424, and Cys-429 together coordinate Zn(2+). The region spanning 590 to 668 (APDNFFKEKT…EQEAIAKIEK (79 aa)) is the BRCT domain.

This sequence belongs to the NAD-dependent DNA ligase family. LigA subfamily. The cofactor is Mg(2+). Mn(2+) is required as a cofactor.

The enzyme catalyses NAD(+) + (deoxyribonucleotide)n-3'-hydroxyl + 5'-phospho-(deoxyribonucleotide)m = (deoxyribonucleotide)n+m + AMP + beta-nicotinamide D-nucleotide.. Functionally, DNA ligase that catalyzes the formation of phosphodiester linkages between 5'-phosphoryl and 3'-hydroxyl groups in double-stranded DNA using NAD as a coenzyme and as the energy source for the reaction. It is essential for DNA replication and repair of damaged DNA. This Lactobacillus johnsonii (strain CNCM I-12250 / La1 / NCC 533) protein is DNA ligase.